Here is a 127-residue protein sequence, read N- to C-terminus: Large ribosomal subunit protein bL12 (127 aa).

The protein belongs to the bacterial ribosomal protein bL12 family. In terms of assembly, homodimer. Part of the ribosomal stalk of the 50S ribosomal subunit. Forms a multimeric L10(L12)X complex, where L10 forms an elongated spine to which 2 to 4 L12 dimers bind in a sequential fashion. Binds GTP-bound translation factors.

In terms of biological role, forms part of the ribosomal stalk which helps the ribosome interact with GTP-bound translation factors. Is thus essential for accurate translation. This is Large ribosomal subunit protein bL12 from Rhizobium etli (strain CIAT 652).